Reading from the N-terminus, the 209-residue chain is MSKKGLLIVISGPSGAGKGTICKALMKEQQFWLSVSATTREPREKEVEGKSYYFLTVDEFKSKISEDGFLEYAEVYGNYYGTPKKSVCEKIDNGENVILEIDIQGALKVKENYPEGVFIFILPPSMEELKKRIIGRGSETEKSLMTRFKSAYKEINYVSKYNYAIINDTVENAVTKINSIIVAEKCRVDRIKDNIIDSKEGKIHEQFYD.

The Guanylate kinase-like domain maps to 5-182 (GLLIVISGPS…AVTKINSIIV (178 aa)). 12–19 (GPSGAGKG) contacts ATP.

It belongs to the guanylate kinase family.

It is found in the cytoplasm. The enzyme catalyses GMP + ATP = GDP + ADP. In terms of biological role, essential for recycling GMP and indirectly, cGMP. In Clostridium acetobutylicum (strain ATCC 824 / DSM 792 / JCM 1419 / IAM 19013 / LMG 5710 / NBRC 13948 / NRRL B-527 / VKM B-1787 / 2291 / W), this protein is Guanylate kinase.